The chain runs to 194 residues: Large ribosomal subunit protein eL15 (194 aa).

Positions 164-194 (SAGKKGRGLRNKGKGAEKVRPSVRANKGKTK) are disordered. Basic residues predominate over residues 167–176 (KKGRGLRNKG).

The protein belongs to the eukaryotic ribosomal protein eL15 family.

The polypeptide is Large ribosomal subunit protein eL15 (Thermococcus gammatolerans (strain DSM 15229 / JCM 11827 / EJ3)).